A 432-amino-acid chain; its full sequence is Patatin-like phospholipase domain-containing protein 5 (432 aa).

The region spanning 12–181 is the PNPLA domain; the sequence is LSFSGSGYMG…SNNLPFSDCP (170 aa). A GXGXXG motif is present at residues 16–21; the sequence is GSGYMG. The short motif at 47 to 51 is the GXSXG element; that stretch reads GSSSG. The active-site Nucleophile is the Ser-49. The active-site Proton acceptor is the Asp-168. The DGA/G signature appears at 168–170; that stretch reads DGA. Residues 404–423 are disordered; the sequence is ADSGLLRQQRGTAPSGNRPL.

It catalyses the reaction a triacylglycerol + H2O = a diacylglycerol + a fatty acid + H(+). Its function is as follows. Has abundant triacylglycerol lipase activity. In Mus musculus (Mouse), this protein is Patatin-like phospholipase domain-containing protein 5.